A 304-amino-acid chain; its full sequence is Non-specific ribonucleoside hydrolase RihC (304 aa).

The active site involves H233.

Belongs to the IUNH family. RihC subfamily.

Hydrolyzes both purine and pyrimidine ribonucleosides with a broad-substrate specificity. This is Non-specific ribonucleoside hydrolase RihC from Shigella sonnei (strain Ss046).